The chain runs to 241 residues: Sugar fermentation stimulation protein homolog (241 aa).

This sequence belongs to the SfsA family.

The chain is Sugar fermentation stimulation protein homolog from Thermosynechococcus vestitus (strain NIES-2133 / IAM M-273 / BP-1).